We begin with the raw amino-acid sequence, 62 residues long: Protein DsrB (62 aa).

Belongs to the DsrB family.

The polypeptide is Protein DsrB (Shigella boydii serotype 18 (strain CDC 3083-94 / BS512)).